The primary structure comprises 808 residues: Leucine-rich repeat-containing protein 41 (808 aa).

An interaction with Elongin BC complex region spans residues 45-54 (ALFELCGRAV). Phosphoserine occurs at positions 155, 276, and 326. Disordered stretches follow at residues 269 to 289 (ASRGRAPSRDEGSLLLGSRRP) and 304 to 404 (TRRK…GSGA). Thr-327 carries the phosphothreonine modification. Residues 357–379 (PSSAPTAASSSTSSKRAPASSVS) show a composition bias toward low complexity. Ser-369 carries the post-translational modification Phosphoserine. Over residues 383-397 (PLKRFKRATGKKGPR) the composition is skewed to basic residues. 7 LRR repeats span residues 483-503 (WVSLESLTLSYNGLGSNIFRL), 514-526 (AGCRLRALHLSDL), 527-551 (FSPLPILELTRAIVRALPLLRVLSI), 609-631 (SGSLQQLSLDSATFASPQDFGLV), 632-655 (LQTLKEYNLSLKRLSFHDMNLADC), 697-724 (NSTLKGLRLPGNRLGNAGLLALADVFSE), and 727-748 (SSSLCQLDISSNCIKPDGLLEF).

In terms of assembly, part of an E3 ubiquitin-protein ligase complex with Elongin BC (ELOB and ELOC), RBX1 and CUL5. Component of a probable ECS(LRRC41) complex which contains CUL5, RNF7/RBX2, Elongin BC and LRRC41. Interacts with CUL5, RNF7, ELOB and ELOC.

It participates in protein modification; protein ubiquitination. In terms of biological role, probable substrate recognition component of an ECS (Elongin BC-CUL2/5-SOCS-box protein) E3 ubiquitin ligase complex which mediates the ubiquitination and subsequent proteasomal degradation of target proteins. The sequence is that of Leucine-rich repeat-containing protein 41 (Lrrc41) from Rattus norvegicus (Rat).